A 121-amino-acid polypeptide reads, in one-letter code: Large ribosomal subunit protein uL14 (121 aa).

It belongs to the universal ribosomal protein uL14 family. In terms of assembly, part of the 50S ribosomal subunit. Forms a cluster with proteins L3 and L19. In the 70S ribosome, L14 and L19 interact and together make contacts with the 16S rRNA in bridges B5 and B8.

Its function is as follows. Binds to 23S rRNA. Forms part of two intersubunit bridges in the 70S ribosome. This Prochlorococcus marinus (strain MIT 9301) protein is Large ribosomal subunit protein uL14.